The sequence spans 117 residues: Large ribosomal subunit protein uL18 (117 aa).

Belongs to the universal ribosomal protein uL18 family. As to quaternary structure, part of the 50S ribosomal subunit; part of the 5S rRNA/L5/L18/L25 subcomplex. Contacts the 5S and 23S rRNAs.

In terms of biological role, this is one of the proteins that bind and probably mediate the attachment of the 5S RNA into the large ribosomal subunit, where it forms part of the central protuberance. This Neisseria gonorrhoeae (strain ATCC 700825 / FA 1090) protein is Large ribosomal subunit protein uL18.